An 80-amino-acid polypeptide reads, in one-letter code: Peroxidase (80 aa).

The segment at 56 to 80 (DANEAEANSDLPGFNSSRSELEAAF) is disordered. P67 is a binding site for substrate. Residue N70 is glycosylated (N-linked (GlcNAc...) asparagine).

Belongs to the peroxidase family. Classical plant (class III) peroxidase subfamily. It depends on Ca(2+) as a cofactor. The cofactor is heme b.

The enzyme catalyses 2 a phenolic donor + H2O2 = 2 a phenolic radical donor + 2 H2O. Its function is as follows. Removal of H(2)O(2), oxidation of toxic reductants, biosynthesis and degradation of lignin, suberization, auxin catabolism, response to environmental stresses such as wounding, pathogen attack and oxidative stress. These functions might be dependent on each isozyme/isoform in each plant tissue. This is Peroxidase from Triticum aestivum (Wheat).